Here is a 339-residue protein sequence, read N- to C-terminus: RNA 3'-terminal phosphate cyclase (339 aa).

ATP contacts are provided by residues Gln103 and 283-287 (HLADQ). The active-site Tele-AMP-histidine intermediate is the His308.

The protein belongs to the RNA 3'-terminal cyclase family. Type 1 subfamily.

Its subcellular location is the cytoplasm. It catalyses the reaction a 3'-end 3'-phospho-ribonucleotide-RNA + ATP = a 3'-end 2',3'-cyclophospho-ribonucleotide-RNA + AMP + diphosphate. Catalyzes the conversion of 3'-phosphate to a 2',3'-cyclic phosphodiester at the end of RNA. The mechanism of action of the enzyme occurs in 3 steps: (A) adenylation of the enzyme by ATP; (B) transfer of adenylate to an RNA-N3'P to produce RNA-N3'PP5'A; (C) and attack of the adjacent 2'-hydroxyl on the 3'-phosphorus in the diester linkage to produce the cyclic end product. The biological role of this enzyme is unknown but it is likely to function in some aspects of cellular RNA processing. This Salmonella typhimurium (strain LT2 / SGSC1412 / ATCC 700720) protein is RNA 3'-terminal phosphate cyclase.